The chain runs to 266 residues: Prolactin-7A1 (266 aa).

Residues 1–30 (MPLSFTQPCSSGALLLLVVSNLLLWENVAC) form the signal peptide. Residues N36, N58, N110, N149, and N157 are each glycosylated (N-linked (GlcNAc...) asparagine). 2 cysteine pairs are disulfide-bonded: C114–C231 and C248–C257.

This sequence belongs to the somatotropin/prolactin family. As to expression, expressed specifically in the placenta. Detected only in the trophoblast giant cells.

The protein localises to the secreted. This Mus musculus (Mouse) protein is Prolactin-7A1 (Prl7a1).